The primary structure comprises 107 residues: U1-lycotoxin-Ls1b (107 aa).

The N-terminal stretch at 1 to 20 (MMKVLVVVALLVTHISYSSS) is a signal peptide. The propeptide occupies 21–41 (EGIDDLEADELLSLMANEQTR). 4 disulfide bridges follow: C44/C59, C51/C68, C58/C86, and C70/C84.

This sequence belongs to the neurotoxin 19 (CSTX) family. 04 (U1-Lctx) subfamily. In terms of tissue distribution, expressed by the venom gland.

The protein localises to the secreted. This is U1-lycotoxin-Ls1b from Lycosa singoriensis (Wolf spider).